The sequence spans 288 residues: N-acetylneuraminate lyase (288 aa).

Residues S44 and T45 each coordinate aceneuramate. Y133 serves as the catalytic Proton donor. K161 serves as the catalytic Schiff-base intermediate with substrate. Positions 163, 185, 187, 188, and 204 each coordinate aceneuramate.

The protein belongs to the DapA family. NanA subfamily. As to quaternary structure, homotetramer.

The protein localises to the cytoplasm. The catalysed reaction is aceneuramate = aldehydo-N-acetyl-D-mannosamine + pyruvate. It participates in amino-sugar metabolism; N-acetylneuraminate degradation; D-fructose 6-phosphate from N-acetylneuraminate: step 1/5. Functionally, catalyzes the reversible aldol cleavage of N-acetylneuraminic acid (sialic acid; Neu5Ac) to form pyruvate and N-acetylmannosamine (ManNAc) via a Schiff base intermediate. This chain is N-acetylneuraminate lyase, found in Clostridium perfringens (strain SM101 / Type A).